The sequence spans 367 residues: Embryonic developmental protein tofu-6 (367 aa).

In terms of domain architecture, RRM spans 13 to 92 (AGFHIRNIPK…FTLKVTDHKN (80 aa)). Residues 298-345 (KSILADRLQRKGVCEYLPRSQQPHYAYSRETLLQHNNSGVTAQISNDA) are required for ife-3 interaction.

Component of the pid-1 variant of the PETISCO complex (also called the pid-3, erh-2, tofu-6, and ife-3 small RNA complex) containing at least pid-1, tofu-6, ife-3, pid-3, and erh-2, which is required for the biogenesis of 21 nucleotide PIWI-interacting RNAs (piRNAs) that possess a uracil residue at the 5'-end (also called 21U-RNAs). Within the pid-1 variant of the PETISCO complex interacts with pid-1. Component of the tost-1 variant of the PETISCO complex (also called the pid-3, erh-2, tofu-6, and ife-3 small RNA complex) containing at least tost-1, tofu-6, ife-3, pid-3, and erh-2, which plays an essential role in embryogenesis. Within the tost-1 variant of the PETISCO complex interacts with tost-1. Within the pid-1 and tost-1 variants of the PETISCO complexes interacts (via C-terminus) with ife-3. Within the pid-1 and tost-1 variants of the PETISCO complexes interacts (via the RRM domain) with pid-3. Within the pid-1 and tost-1 variants of the PETISCO complexes interacts (via the RRM domain) with erh-2. In contrast to the pid-1 variant of the PETISCO complex, the tost-1 variant of the PETISCO complex plays a minor role in the biogenesis of 21U-RNAs. Interacts (via residues 120-314) with the PUCH complex subunit tofu-1 (via residues 82-172); the interaction between the PETISCO and PUCH complex members enhances piRNA production in vivo. As to expression, expression is restricted to the germline (at protein level).

The protein resides in the cytoplasm. The protein localises to the perinuclear region. Its subcellular location is the nucleus. Its function is as follows. Component of the pid-1 and tost-1 variants of the PETISCO complexes, which have roles in the biogenesis of a class of 21 nucleotide PIWI-interacting RNAs (piRNAs) that possess a uracil residue at the 5'-end (also called 21U-RNAs) and embryogenesis, respectively. Promotes the biogenesis of 21U-RNAs. Mediates the interaction between the PETISCO complex and the PUCH complex, the endoribonuclease complex processing the 5'-end of precursor piRNAs, thereby enhancing mature piRNA production. Required for chromosome segregation and cell division in early embryos. May have a role in DNA replication. This is Embryonic developmental protein tofu-6 from Caenorhabditis elegans.